The sequence spans 218 residues: Large ribosomal subunit protein bL25 (218 aa).

Residues V178–E218 are disordered. Residues E185 to T195 show a composition bias toward acidic residues. A compositionally biased stretch (basic and acidic residues) spans T203–E218.

Belongs to the bacterial ribosomal protein bL25 family. CTC subfamily. In terms of assembly, part of the 50S ribosomal subunit; part of the 5S rRNA/L5/L18/L25 subcomplex. Contacts the 5S rRNA. Binds to the 5S rRNA independently of L5 and L18.

Functionally, this is one of the proteins that binds to the 5S RNA in the ribosome where it forms part of the central protuberance. This Shouchella clausii (strain KSM-K16) (Alkalihalobacillus clausii) protein is Large ribosomal subunit protein bL25.